A 263-amino-acid polypeptide reads, in one-letter code: Hydroxyethylthiazole kinase (263 aa).

Substrate is bound at residue methionine 39. Lysine 115 and threonine 160 together coordinate ATP. Position 187 (glycine 187) interacts with substrate.

It belongs to the Thz kinase family. Mg(2+) is required as a cofactor.

The catalysed reaction is 5-(2-hydroxyethyl)-4-methylthiazole + ATP = 4-methyl-5-(2-phosphooxyethyl)-thiazole + ADP + H(+). Its pathway is cofactor biosynthesis; thiamine diphosphate biosynthesis; 4-methyl-5-(2-phosphoethyl)-thiazole from 5-(2-hydroxyethyl)-4-methylthiazole: step 1/1. In terms of biological role, catalyzes the phosphorylation of the hydroxyl group of 4-methyl-5-beta-hydroxyethylthiazole (THZ). The polypeptide is Hydroxyethylthiazole kinase (Staphylococcus aureus (strain bovine RF122 / ET3-1)).